The sequence spans 274 residues: MAVIKMKPTSPGMRGMVKISRDHLHKGEPYAPLLEPQFQKSGRNNNGHITVRHKGGGHKHHYRVVDFKRNKDAIPAKVERIEYDPNRTAHIALLCYADGERTYIIAPRGLEVGATLISGSEAPIRVGNTLPIRNIPVGSTIHCIEMQIGKGAQIARSAGTSATLLAREGTYAQVRMRSGEVRKIHIECRATIGEVANEEHSLRRLGKAGVKRWMGIRPTVRGVVMNPVDHPHGGGEGKTGEGRHPVDPWGNLTKGYRTRNNKRTQVMIVSRRKK.

Residues 224-256 (VMNPVDHPHGGGEGKTGEGRHPVDPWGNLTKGY) form a disordered region. Positions 229-246 (DHPHGGGEGKTGEGRHPV) are enriched in basic and acidic residues.

It belongs to the universal ribosomal protein uL2 family. As to quaternary structure, part of the 50S ribosomal subunit. Forms a bridge to the 30S subunit in the 70S ribosome.

Its function is as follows. One of the primary rRNA binding proteins. Required for association of the 30S and 50S subunits to form the 70S ribosome, for tRNA binding and peptide bond formation. It has been suggested to have peptidyltransferase activity; this is somewhat controversial. Makes several contacts with the 16S rRNA in the 70S ribosome. This Polaromonas sp. (strain JS666 / ATCC BAA-500) protein is Large ribosomal subunit protein uL2.